The primary structure comprises 393 residues: Sugar efflux transporter A (393 aa).

12 helical membrane passes run 22-42, 51-71, 82-102, 107-127, 152-172, 174-194, 219-239, 253-273, 287-307, 308-328, 344-364, and 366-386; these read VIAF…SLFL, FMVG…SQIL, KTLI…YAWN, VLLF…PQLF, ISLS…GFGF, AMYL…WLLL, LLLF…LINM, LAGV…LLAG, LAVI…GSWA, LLAL…MGML, LFTN…GIVA, and VWSY…AAVC.

The protein belongs to the major facilitator superfamily. Set transporter family.

Its subcellular location is the cell inner membrane. Functionally, involved in the efflux of sugars. The physiological role may be the reduction of the intracellular concentration of toxic sugars or sugar metabolites. Transports IPTG, lactose and arabinose. This Dickeya chrysanthemi (Pectobacterium chrysanthemi) protein is Sugar efflux transporter A (sotA).